Reading from the N-terminus, the 108-residue chain is MNLLNKSLEENGSFLTALYIIVGFLALYLLGRALQAFVQAADACCLFWYTWVVIPGAKGTAFVYKYTYGRKLNNPELEAVIVNEFPKNGWNNKNPANFQDAQRDKLYS.

Residues 1–10 lie on the Virion surface side of the membrane; that stretch reads MNLLNKSLEE. The chain crosses the membrane as a helical span at residues 11–31; it reads NGSFLTALYIIVGFLALYLLG. The Intravirion portion of the chain corresponds to 32-108; sequence RALQAFVQAA…QDAQRDKLYS (77 aa). The segment at 88–108 is disordered; it reads NGWNNKNPANFQDAQRDKLYS. Residues 89–100 are compositionally biased toward polar residues; it reads GWNNKNPANFQD.

This sequence belongs to the gammacoronaviruses E protein family. In terms of assembly, homooligomer. Interacts with the M membrane protein in the budding compartment of the host cell, which is located between endoplasmic reticulum and the Golgi complex. The cytoplasmic tails of both proteins are important for this function. Interacts with Nucleoprotein.

The protein resides in the host Golgi apparatus membrane. Plays a central role in virus morphogenesis and assembly. Acts as a viroporin and self-assembles in host membranes forming pentameric protein-lipid pores that allow ion transport. Also plays a role in the induction of apoptosis. The sequence is that of Envelope small membrane protein from Gallus gallus (Chicken).